The chain runs to 47 residues: Large ribosomal subunit protein eL40 (47 aa).

Belongs to the eukaryotic ribosomal protein eL40 family.

The chain is Large ribosomal subunit protein eL40 from Methanocaldococcus jannaschii (strain ATCC 43067 / DSM 2661 / JAL-1 / JCM 10045 / NBRC 100440) (Methanococcus jannaschii).